The following is a 170-amino-acid chain: Adenine phosphoribosyltransferase (170 aa).

The protein belongs to the purine/pyrimidine phosphoribosyltransferase family. Homodimer.

The protein resides in the cytoplasm. The enzyme catalyses AMP + diphosphate = 5-phospho-alpha-D-ribose 1-diphosphate + adenine. It functions in the pathway purine metabolism; AMP biosynthesis via salvage pathway; AMP from adenine: step 1/1. Its function is as follows. Catalyzes a salvage reaction resulting in the formation of AMP, that is energically less costly than de novo synthesis. The chain is Adenine phosphoribosyltransferase from Mycoplasmopsis agalactiae (strain NCTC 10123 / CIP 59.7 / PG2) (Mycoplasma agalactiae).